A 137-amino-acid polypeptide reads, in one-letter code: 5-hydroxytryptamine receptor 4 (137 aa).

Residues 12–35 (TPLRVAVLLAGCWAIPVLISFLPI) traverse the membrane as a helical segment. Asn-58 carries N-linked (GlcNAc...) asparagine glycosylation. The helical transmembrane segment at 67 to 90 (NKPYAITCSVVAFYIPFLLMVLAY) threads the bilayer. The tract at residues 112 to 137 (APAEGRPPSADQHSTHRMRTETKAAK) is disordered.

The protein belongs to the G-protein coupled receptor 1 family. As to quaternary structure, interacts (via C-terminus 330-346 AA) with GRK5; this interaction is promoted by 5-HT (serotonin).

Its subcellular location is the cell membrane. The protein localises to the endosome membrane. In terms of biological role, G-protein coupled receptor for 5-hydroxytryptamine (serotonin), a biogenic hormone that functions as a neurotransmitter, a hormone and a mitogen. Ligand binding causes a conformation change that triggers signaling via guanine nucleotide-binding proteins (G proteins) and modulates the activity of downstream effectors. HTR4 is coupled to G(s) G alpha proteins and mediates activation of adenylate cyclase activity. The chain is 5-hydroxytryptamine receptor 4 (HTR4) from Sus scrofa (Pig).